Consider the following 332-residue polypeptide: HTH-type transcriptional regulator RegA (332 aa).

Positions 1–57 (MATSIKDVAREAGVSIATVSRVLNDIDVVNEDTKKKVLDAIKELGYRPNIVARSLKT) constitute an HTH lacI-type domain. The segment at residues 5-24 (IKDVAREAGVSIATVSRVLN) is a DNA-binding region (H-T-H motif).

Functionally, involved in the regulation of amylase production. The sequence is that of HTH-type transcriptional regulator RegA (regA) from Clostridium saccharobutylicum.